The following is a 100-amino-acid chain: Urease subunit gamma (100 aa).

The protein belongs to the urease gamma subunit family. In terms of assembly, heterotrimer of UreA (gamma), UreB (beta) and UreC (alpha) subunits. Three heterotrimers associate to form the active enzyme.

Its subcellular location is the cytoplasm. It carries out the reaction urea + 2 H2O + H(+) = hydrogencarbonate + 2 NH4(+). Its pathway is nitrogen metabolism; urea degradation; CO(2) and NH(3) from urea (urease route): step 1/1. The protein is Urease subunit gamma of Prochlorococcus marinus (strain NATL1A).